The following is a 537-amino-acid chain: Copine-3 (537 aa).

2 C2 domains span residues 1-115 (MAAQ…TRPL) and 124-247 (GKGS…PVEF). Residue S14 is modified to Phosphoserine. Residues D22, D28, D81, D83, D93, D154, and D160 each coordinate Ca(2+). Residue S197 is modified to Phosphoserine. Residues D216, D218, and D224 each coordinate Ca(2+). Position 243 is a phosphoserine (S243). The VWFA domain maps to 291–513 (NFTVGVDFTG…AQCVLAEIPQ (223 aa)).

It belongs to the copine family. Monomer. Interacts with ERBB2 (preferentially with the tyrosine phosphorylated form); this interaction occurs at the cell membrane and is increased in a growth factor heregulin-dependent manner. Interacts with SHC1; this interaction may mediate the binding of CPNE3 with ERBB2. Interacts with RACK1. Ca(2+) serves as cofactor. In terms of processing, phosphorylated on serine and threonine residues. As to expression, expressed in breast and weakly in prostate and ovarian tissues. Expressed in neutrophils (at protein level). Widely expressed. Expressed in the brain. Expressed in neutrophil precursors from the bone marrow and peripheral blood. Expressed in primary breast tumors and ovarian endometrioid adenocarcinoma.

It localises to the nucleus. The protein localises to the cytoplasm. Its subcellular location is the cell membrane. The protein resides in the cell junction. It is found in the focal adhesion. Its function is as follows. Calcium-dependent phospholipid-binding protein that plays a role in ERBB2-mediated tumor cell migration in response to growth factor heregulin stimulation. In Homo sapiens (Human), this protein is Copine-3.